The primary structure comprises 247 residues: Proteasome subunit alpha type-7-1 (247 aa).

It belongs to the peptidase T1A family. As to quaternary structure, the 26S proteasome consists of a 20S proteasome core and two 19S regulatory subunits. The 20S proteasome core is composed of 28 subunits that are arranged in four stacked rings, resulting in a barrel-shaped structure. The two end rings are each formed by seven alpha subunits, and the two central rings are each formed by seven beta subunits. The catalytic chamber with the active sites is on the inside of the barrel.

It is found in the cytoplasm. The protein localises to the nucleus. The proteasome is a multicatalytic proteinase complex which is characterized by its ability to cleave peptides with Arg, Phe, Tyr, Leu, and Glu adjacent to the leaving group at neutral or slightly basic pH. The proteasome has an ATP-dependent proteolytic activity. This Drosophila virilis (Fruit fly) protein is Proteasome subunit alpha type-7-1 (Pros28.1).